Consider the following 332-residue polypeptide: Olfactory receptor 10G6 (332 aa).

The Extracellular portion of the chain corresponds to 1–46 (MLEGVEHLLLLLLLTDVNSKELQSGNQTSVSHFILVGLHHPPQLGA). N26 carries N-linked (GlcNAc...) asparagine glycosylation. The chain crosses the membrane as a helical span at residues 47-67 (PLFLAFLVIYLLTVSGNGLII). Residues 68 to 75 (LTVLVDIR) are Cytoplasmic-facing. Residues 76-96 (LHRPMCLFLCHLSFLDMTISC) form a helical membrane-spanning segment. At 97–120 (AIVPKMLAGFLLGSRIISFGGCVI) the chain is on the extracellular side. A disulfide bridge links C118 with C210. The chain crosses the membrane as a helical span at residues 121–141 (QLFSFHFLGCTECFLYTLMAY). The Cytoplasmic portion of the chain corresponds to 142 to 160 (DRFLAICKPLHYATIMTHR). The helical transmembrane segment at 161–181 (VCNSLALGTWLGGTIHSLFQT) threads the bilayer. Over 182–218 (SFVFRLPFCGPNRVDYIFCDIPAMLRLACADTAINEL) the chain is Extracellular. The chain crosses the membrane as a helical span at residues 219-238 (VTFADIGFLALTCFMLILTS). Residues 239–258 (YGYIVAAILRIPSADGRRNA) lie on the Cytoplasmic side of the membrane. Residues 259–279 (FSTCAAHLTVVIVYYVPCTFI) traverse the membrane as a helical segment. Topologically, residues 280 to 290 (YLRPCSQEPLD) are extracellular. A helical transmembrane segment spans residues 291 to 311 (GVVAVFYTVITPLLNSIIYTL). The Cytoplasmic segment spans residues 312-332 (CNKEMKAALQRLGGHKEVQPH).

This sequence belongs to the G-protein coupled receptor 1 family.

Its subcellular location is the cell membrane. Functionally, odorant receptor. The sequence is that of Olfactory receptor 10G6 (OR10G6) from Homo sapiens (Human).